A 205-amino-acid polypeptide reads, in one-letter code: MNKGAFITLEGPEGSGKTTIVKMIEKYLSENNIEYISTREPGGINISEQIRDVILNKDNVAMDARTEALLYVASRRQHLAERVIPAIKEGKVVICDRFIDSSLAYQGYARGIGIDEVMAINEFAIDGYMPDLTLYLDIEPEVGLKRISKNNEREVNRLDLEALDFHKKVREGYFKLLEKYPNRIKKINANQPVDKVFEEVKGFLK.

11 to 18 (GPEGSGKT) is an ATP binding site.

Belongs to the thymidylate kinase family.

It catalyses the reaction dTMP + ATP = dTDP + ADP. In terms of biological role, phosphorylation of dTMP to form dTDP in both de novo and salvage pathways of dTTP synthesis. The polypeptide is Thymidylate kinase (Clostridium novyi (strain NT)).